The chain runs to 474 residues: Bifunctional protein HldE (474 aa).

The segment at 1–318 is ribokinase; that stretch reads MKLSMPRFDQ…RAIQREEGSE (318 aa). 194–197 serves as a coordination point for ATP; that stretch reads NLSE. Residue Asp263 is part of the active site. The cytidylyltransferase stretch occupies residues 343–474; sequence FTNGCFDILH…AIVEKIRGQG (132 aa).

This sequence in the N-terminal section; belongs to the carbohydrate kinase PfkB family. It in the C-terminal section; belongs to the cytidylyltransferase family. In terms of assembly, homodimer.

It carries out the reaction D-glycero-beta-D-manno-heptose 7-phosphate + ATP = D-glycero-beta-D-manno-heptose 1,7-bisphosphate + ADP + H(+). It catalyses the reaction D-glycero-beta-D-manno-heptose 1-phosphate + ATP + H(+) = ADP-D-glycero-beta-D-manno-heptose + diphosphate. Its pathway is nucleotide-sugar biosynthesis; ADP-L-glycero-beta-D-manno-heptose biosynthesis; ADP-L-glycero-beta-D-manno-heptose from D-glycero-beta-D-manno-heptose 7-phosphate: step 1/4. It participates in nucleotide-sugar biosynthesis; ADP-L-glycero-beta-D-manno-heptose biosynthesis; ADP-L-glycero-beta-D-manno-heptose from D-glycero-beta-D-manno-heptose 7-phosphate: step 3/4. In terms of biological role, catalyzes the phosphorylation of D-glycero-D-manno-heptose 7-phosphate at the C-1 position to selectively form D-glycero-beta-D-manno-heptose-1,7-bisphosphate. Catalyzes the ADP transfer from ATP to D-glycero-beta-D-manno-heptose 1-phosphate, yielding ADP-D-glycero-beta-D-manno-heptose. This is Bifunctional protein HldE from Pseudomonas syringae pv. tomato (strain ATCC BAA-871 / DC3000).